Here is a 250-residue protein sequence, read N- to C-terminus: MSNDPTHQFLIQKIVPIEIGGIDFSFTNASLFMAASAAVAAGFLYFSTSNRAIVPGRSQSVAEMSYEFIANMLKEGAGKQGLKFFPLVFSLFMFVLTANLLGMFPYFFTITSQIIVTFALAILVISTVLIYGFYKHGFHFLNVFVPSGVPGILLPLVVAIEIISFLSRPISLSVRLFANMLAGHITLKVFAGFVASLGALGAVGVGGAVLPLIMTVALTGLEFLVAFLQAYVFAVLTCMYLNDAIHPGGH.

Helical transmembrane passes span 26–46 (FTNA…FLYF), 84–104 (FFPL…LGMF), 114–134 (IIVT…YGFY), 143–163 (VFVP…IEII), 193–213 (FVAS…LPLI), and 216–236 (VALT…FAVL).

Belongs to the ATPase A chain family. As to quaternary structure, F-type ATPases have 2 components, CF(1) - the catalytic core - and CF(0) - the membrane proton channel. CF(1) has five subunits: alpha(3), beta(3), gamma(1), delta(1), epsilon(1). CF(0) has three main subunits: a(1), b(2) and c(9-12). The alpha and beta chains form an alternating ring which encloses part of the gamma chain. CF(1) is attached to CF(0) by a central stalk formed by the gamma and epsilon chains, while a peripheral stalk is formed by the delta and b chains.

The protein resides in the cell inner membrane. Its function is as follows. Key component of the proton channel; it plays a direct role in the translocation of protons across the membrane. The protein is ATP synthase subunit a of Rhizobium etli (strain ATCC 51251 / DSM 11541 / JCM 21823 / NBRC 15573 / CFN 42).